The chain runs to 304 residues: Release factor glutamine methyltransferase (304 aa).

2 residues coordinate S-adenosyl-L-methionine: Asp-144 and Asn-188. 188–191 (NPPY) serves as a coordination point for substrate.

Belongs to the protein N5-glutamine methyltransferase family. PrmC subfamily.

The catalysed reaction is L-glutaminyl-[peptide chain release factor] + S-adenosyl-L-methionine = N(5)-methyl-L-glutaminyl-[peptide chain release factor] + S-adenosyl-L-homocysteine + H(+). Functionally, methylates the class 1 translation termination release factors RF1/PrfA and RF2/PrfB on the glutamine residue of the universally conserved GGQ motif. The protein is Release factor glutamine methyltransferase of Mycobacterium tuberculosis (strain CDC 1551 / Oshkosh).